A 90-amino-acid polypeptide reads, in one-letter code: Large ribosomal subunit protein bL31 (90 aa).

The interval 71-90 (KVKKFPSNADNQKEPAEEQE) is disordered. Residues 81 to 90 (NQKEPAEEQE) show a composition bias toward basic and acidic residues.

The protein belongs to the bacterial ribosomal protein bL31 family. Type A subfamily. In terms of assembly, part of the 50S ribosomal subunit.

Binds the 23S rRNA. The protein is Large ribosomal subunit protein bL31 (rpmE) of Aster yellows witches'-broom phytoplasma (strain AYWB).